The sequence spans 872 residues: Paramyosin (872 aa).

The tract at residues 1 to 31 (MSLYRSPSAALLKSPSQAAFGAPFGSMSVAD) is nonhelical region. Residues 32-851 (LGSLTRLEDK…ESSLHLIRAK (820 aa)) adopt a coiled-coil conformation. The interaction with unc-89 stretch occupies residues 294–376 (EITQWKSKFD…ALLERAREQL (83 aa)). Positions 856–866 (VVTGKSSSKIF) are nonhelical region.

Belongs to the paramyosin family. In terms of assembly, homodimer. May interact with unc-89 (via SH3 domain). Phosphorylated on serine residues in the N-terminal non-helical region. Expressed in body wall muscles of larvae and adults (at protein level). Expressed in gonadal myoepithelial sheath cells (at protein level).

It is found in the cytoplasm. It localises to the myofibril. The protein localises to the sarcomere. Its subcellular location is the a band. Functionally, structural component of the muscle thick filaments which is involved in assembly and organization of sarcomere myofilaments. Involved in ovulation. Plays a role in the formation of muscle connections, also called muscle arm extensions, between the body wall and the motor axons in the dorsal and ventral cord. This chain is Paramyosin (unc-15), found in Caenorhabditis elegans.